Consider the following 1399-residue polypeptide: DNA-directed RNA polymerase subunit beta' (1399 aa).

Zn(2+)-binding residues include C70, C72, C85, and C88. D460, D462, and D464 together coordinate Mg(2+). The Zn(2+) site is built by C814, C888, C895, and C898.

Belongs to the RNA polymerase beta' chain family. As to quaternary structure, the RNAP catalytic core consists of 2 alpha, 1 beta, 1 beta' and 1 omega subunit. When a sigma factor is associated with the core the holoenzyme is formed, which can initiate transcription. Requires Mg(2+) as cofactor. Zn(2+) serves as cofactor.

The catalysed reaction is RNA(n) + a ribonucleoside 5'-triphosphate = RNA(n+1) + diphosphate. DNA-dependent RNA polymerase catalyzes the transcription of DNA into RNA using the four ribonucleoside triphosphates as substrates. The protein is DNA-directed RNA polymerase subunit beta' of Pseudomonas putida (strain ATCC 700007 / DSM 6899 / JCM 31910 / BCRC 17059 / LMG 24140 / F1).